Reading from the N-terminus, the 308-residue chain is Baculoviral IAP repeat-containing protein bir-2 (308 aa).

BIR repeat units lie at residues 27–98 and 170–241; these read RFAS…EFVM and RLAT…DFIK. Zn(2+)-binding residues include cysteine 68, cysteine 71, histidine 87, cysteine 94, cysteine 211, cysteine 214, histidine 230, and cysteine 237.

The protein belongs to the IAP family.

The sequence is that of Baculoviral IAP repeat-containing protein bir-2 from Caenorhabditis elegans.